Here is a 112-residue protein sequence, read N- to C-terminus: PTS system lactose-specific EIIA component (112 aa).

Residues 6-104 (EEISMVGFAL…TRYMIRMFKR (99 aa)) enclose the PTS EIIA type-3 domain. H80 serves as the catalytic Tele-phosphohistidine intermediate. The residue at position 80 (H80) is a Phosphohistidine; by HPr. D83 contributes to the Mg(2+) binding site.

As to quaternary structure, homotrimer. Mg(2+) serves as cofactor.

The protein resides in the cytoplasm. In terms of biological role, the phosphoenolpyruvate-dependent sugar phosphotransferase system (sugar PTS), a major carbohydrate active transport system, catalyzes the phosphorylation of incoming sugar substrates concomitantly with their translocation across the cell membrane. The enzyme II LacEF PTS system is involved in lactose transport. This chain is PTS system lactose-specific EIIA component, found in Lacticaseibacillus casei (Lactobacillus casei).